We begin with the raw amino-acid sequence, 66 residues long: Large ribosomal subunit protein uL29 (66 aa).

This sequence belongs to the universal ribosomal protein uL29 family.

The polypeptide is Large ribosomal subunit protein uL29 (Brucella abortus (strain S19)).